The following is a 202-amino-acid chain: Small ribosomal subunit protein uS3 (202 aa).

A KH type-2 domain is found at 18 to 87 (LNEYLQRQLV…NPQIDVVEVP (70 aa)).

This sequence belongs to the universal ribosomal protein uS3 family. Part of the 30S ribosomal subunit.

Functionally, binds the lower part of the 30S subunit head. This chain is Small ribosomal subunit protein uS3, found in Thermofilum pendens (strain DSM 2475 / Hrk 5).